The following is a 420-amino-acid chain: Probable pectate lyase C (420 aa).

The signal sequence occupies residues 1 to 20 (MKLSAPLLVSLAAFSQAVTA). N-linked (GlcNAc...) asparagine glycosylation is found at Asn49, Asn165, and Asn202. Residue Arg205 is part of the active site. Positions 262–297 (NANFHGYVQNNYYDPDKDGQLDGFELGVSSSNYGGV) constitute an EF-hand domain. Ca(2+) is bound by residues Asp275, Asp277, Asp279, Gln281, and Glu286. The segment at 358 to 396 (TMGGPGTLNGGTPAKDTDGDGIPDEAEKQLGTDPNTNDS) is disordered. An N-linked (GlcNAc...) asparagine glycan is attached at Asn394.

This sequence belongs to the polysaccharide lyase 1 family. Requires Ca(2+) as cofactor.

It is found in the secreted. The catalysed reaction is Eliminative cleavage of (1-&gt;4)-alpha-D-galacturonan to give oligosaccharides with 4-deoxy-alpha-D-galact-4-enuronosyl groups at their non-reducing ends.. Functionally, pectinolytic enzyme consist of four classes of enzymes: pectin lyase, polygalacturonase, pectin methylesterase and rhamnogalacturonase. Among pectinolytic enzymes, pectin lyase is the most important in depolymerization of pectin, since it cleaves internal glycosidic bonds of highly methylated pectins. Favors pectate, the anion, over pectin, the methyl ester. In Aspergillus fumigatus (strain CBS 144.89 / FGSC A1163 / CEA10) (Neosartorya fumigata), this protein is Probable pectate lyase C (plyC).